We begin with the raw amino-acid sequence, 147 residues long: Holo-[acyl-carrier-protein] synthase (147 aa).

Residues Asp7 and Glu60 each contribute to the Mg(2+) site.

Belongs to the P-Pant transferase superfamily. AcpS family. Mg(2+) serves as cofactor.

The protein resides in the cytoplasm. The enzyme catalyses apo-[ACP] + CoA = holo-[ACP] + adenosine 3',5'-bisphosphate + H(+). In terms of biological role, transfers the 4'-phosphopantetheine moiety from coenzyme A to a Ser of acyl-carrier-protein. In Bifidobacterium animalis subsp. lactis (strain AD011), this protein is Holo-[acyl-carrier-protein] synthase.